Reading from the N-terminus, the 201-residue chain is Small ribosomal subunit protein uS4c (201 aa).

The region spanning 91 to 151 (MRLDNIIFQL…TKNPEELRTI (61 aa)) is the S4 RNA-binding domain.

This sequence belongs to the universal ribosomal protein uS4 family. In terms of assembly, part of the 30S ribosomal subunit. Contacts protein S5. The interaction surface between S4 and S5 is involved in control of translational fidelity.

The protein resides in the plastid. The protein localises to the chloroplast. In terms of biological role, one of the primary rRNA binding proteins, it binds directly to 16S rRNA where it nucleates assembly of the body of the 30S subunit. Functionally, with S5 and S12 plays an important role in translational accuracy. In Welwitschia mirabilis (Tree tumbo), this protein is Small ribosomal subunit protein uS4c (rps4).